The following is a 375-amino-acid chain: Growth/differentiation factor 8 (375 aa).

The first 23 residues, 1-23 (MQKLQLCVYIYLFMLIVAGPVDL), serve as a signal peptide directing secretion. A propeptide spanning residues 24-266 (NENSEQKENV…VTDTPKRSRR (243 aa)) is cleaved from the precursor. Asn-71 carries N-linked (GlcNAc...) asparagine glycosylation. 4 cysteine pairs are disulfide-bonded: Cys-272–Cys-282, Cys-281–Cys-340, Cys-309–Cys-372, and Cys-313–Cys-374.

It belongs to the TGF-beta family. In terms of assembly, homodimer; disulfide-linked. Interacts with WFIKKN2, leading to inhibit its activity. Interacts with FST3. Post-translationally, synthesized as large precursor molecule that undergoes proteolytic cleavage to generate an N-terminal propeptide and a disulfide linked C-terminal dimer, which is the biologically active molecule. The circulating form consists of a latent complex of the C-terminal dimer and other proteins, including its propeptide, which maintain the C-terminal dimer in a latent, inactive state. Ligand activation requires additional cleavage of the prodomain by a tolloid-like metalloproteinase.

It is found in the secreted. In terms of biological role, acts specifically as a negative regulator of skeletal muscle growth. This is Growth/differentiation factor 8 (MSTN) from Homo sapiens (Human).